The primary structure comprises 545 residues: Glucose-6-phosphate isomerase (545 aa).

The active-site Proton donor is the Glu351. Active-site residues include His382 and Lys510.

The protein belongs to the GPI family.

It is found in the cytoplasm. The enzyme catalyses alpha-D-glucose 6-phosphate = beta-D-fructose 6-phosphate. It participates in carbohydrate biosynthesis; gluconeogenesis. It functions in the pathway carbohydrate degradation; glycolysis; D-glyceraldehyde 3-phosphate and glycerone phosphate from D-glucose: step 2/4. Catalyzes the reversible isomerization of glucose-6-phosphate to fructose-6-phosphate. The polypeptide is Glucose-6-phosphate isomerase (Shewanella baltica (strain OS155 / ATCC BAA-1091)).